The primary structure comprises 122 residues: Ribonuclease P protein component (122 aa).

Belongs to the RnpA family. Consists of a catalytic RNA component (M1 or rnpB) and a protein subunit.

The catalysed reaction is Endonucleolytic cleavage of RNA, removing 5'-extranucleotides from tRNA precursor.. Its function is as follows. RNaseP catalyzes the removal of the 5'-leader sequence from pre-tRNA to produce the mature 5'-terminus. It can also cleave other RNA substrates such as 4.5S RNA. The protein component plays an auxiliary but essential role in vivo by binding to the 5'-leader sequence and broadening the substrate specificity of the ribozyme. The chain is Ribonuclease P protein component from Lactobacillus helveticus (strain DPC 4571).